Here is a 512-residue protein sequence, read N- to C-terminus: Ammonium transporter 2 (512 aa).

The Extracellular portion of the chain corresponds to 1 to 47; the sequence is MSSVNSIPTATSTVYISVLPATATPSGGSGGNVLHEDLNKFYDYGNT. Residues 48-68 form a helical membrane-spanning segment; sequence SWILACTPLCLIMVPGVAFFY. The Cytoplasmic portion of the chain corresponds to 69–77; the sequence is SGLARRKNT. Residues 78–98 traverse the membrane as a helical segment; the sequence is LALIMLSMLGLCVSFFQWYFW. Residues 99 to 137 are Extracellular-facing; the sequence is GYSLAFSQTGTSGYIGNLRHFAFIRTLADYSPGSNNIPE. The chain crosses the membrane as a helical span at residues 138 to 158; the sequence is LVFANFQGMFAAITVALFTGA. Topologically, residues 159-167 are cytoplasmic; the sequence is AAERGRIGP. Residues 168-188 form a helical membrane-spanning segment; it reads MLIITFVWLTVVYCPIACWIW. Topologically, residues 189 to 201 are extracellular; that stretch reads NPNGWAFKFGVYD. A helical membrane pass occupies residues 202–222; sequence FAGGGPVEVGSGFAALAYTVC. At 223-238 the chain is on the cytoplasmic side; that stretch reads LGRRSKFVEEQFRPHS. The chain crosses the membrane as a helical span at residues 239–259; the sequence is VLNVVLGTSLLWFGWLGFNGG. The Extracellular segment spans residues 260 to 267; it reads SAYGSNLR. The helical transmembrane segment at 268 to 288 threads the bilayer; that stretch reads AAMAITNTNLAGAVAGLVWVI. Over 289-300 the chain is Cytoplasmic; the sequence is YDYIFRTRKWST. Residues 301–321 form a helical membrane-spanning segment; the sequence is IGFCSGVVAGLVAATPCAGFV. Ser-322 is a topological domain (extracellular). Residues 323–343 traverse the membrane as a helical segment; that stretch reads PHASLAIGAITGLCCNWAIKL. The Cytoplasmic portion of the chain corresponds to 344 to 354; it reads KSHMRIDDAMD. A helical transmembrane segment spans residues 355-375; it reads IFAIHGVAGFVGTFLNGLFAV. Over 376–406 the chain is Extracellular; it reads DYIAAMDGIYVGENKIRGGWFDHHWRQLGLQ. The helical transmembrane segment at 407–427 threads the bilayer; it reads MAYICAVGAYDFVVTFIILFI. Residues 428–512 are Cytoplasmic-facing; sequence TDKIPYLQLR…TNPLELGLTI (85 aa).

Belongs to the ammonia transporter channel (TC 1.A.11.2) family.

The protein localises to the membrane. Its function is as follows. Transporter for ammonium to use as a nitrogen source. The chain is Ammonium transporter 2 (amt2) from Schizosaccharomyces pombe (strain 972 / ATCC 24843) (Fission yeast).